The following is a 1046-amino-acid chain: Protein HBT1 (1046 aa).

Disordered stretches follow at residues 1–455 (MNMN…AAEK), 469–894 (DYQQ…LGGA), and 908–1046 (PSLI…RSEI). The residue at position 41 (Ser-41) is a Phosphoserine. Positions 81-96 (KDSETPHEDTEADANR) are enriched in basic and acidic residues. 3 stretches are compositionally biased toward polar residues: residues 98–149 (ANVT…SPPT), 175–191 (IATT…TSPV), and 228–301 (ANTG…NTDS). Ser-303 carries the phosphoserine modification. The span at 327-341 (VYTSTGPKSNVSSGM) shows a compositional bias: polar residues. Ser-363 carries the phosphoserine modification. 2 stretches are compositionally biased toward polar residues: residues 389-408 (QTGL…QQTM) and 420-429 (GFVSQQPSYH). Residues 430 to 455 (DSNKNIQHPEKNKVDNKNISERAAEK) are compositionally biased toward basic and acidic residues. A compositionally biased stretch (polar residues) spans 488–498 (YSSSAGKNKNL). Ser-491 is modified (phosphoserine). Over residues 529–538 (GHMKYNDNGR) the composition is skewed to basic and acidic residues. Polar residues predominate over residues 548–559 (QAGSQNTNNNID). A Phosphoserine modification is found at Ser-561. Polar residues predominate over residues 570–582 (GLSNDATTRNNVV). A compositionally biased stretch (basic and acidic residues) spans 586 to 597 (MKDEDMNEDSTK). The segment covering 605-619 (YLDDVEDYHENDIDD) has biased composition (acidic residues). A compositionally biased stretch (basic and acidic residues) spans 621–630 (SNAKKNDLYS). Ser-671 bears the Phosphoserine mark. Positions 742 to 756 (FTNNPETGTTGNVDT) are enriched in polar residues. Basic and acidic residues predominate over residues 773–782 (DDSKNTDTHL). 2 stretches are compositionally biased toward polar residues: residues 792–802 (NSRSGDTTYSK) and 837–855 (SSEQ…NQEY). Tyr-855 carries the post-translational modification Phosphotyrosine. Ser-857 carries the phosphoserine modification. Over residues 868–890 (KVLEEDAPGYKREVDLKNKRRTD) the composition is skewed to basic and acidic residues. Residues 922–951 (DTNTSSSQKPSEGTYPETTSYSIHNETTSQ) show a composition bias toward polar residues. The span at 952 to 963 (GRKVSVGSMGSG) shows a compositional bias: low complexity. Positions 964 to 976 (KSKHHHNHHRHSR) are enriched in basic residues. Ser-1005 is modified (phosphoserine). A compositionally biased stretch (acidic residues) spans 1006-1019 (DEGEQDYHDDEQGE). A Phosphoserine modification is found at Ser-1034.

As to quaternary structure, conjugated with HUB1. HUB1 has not the classical C-terminal Gly residue, so it is still unknown how conjugation may occur.

It is found in the cytoplasm. In terms of biological role, polarity-determining protein which forms a conjugate with the ubiquitin-like modifier HUB1. Involved in bud site selection and cellular morphogenesis during conjugation. Required for survival during stationary phase. The protein is Protein HBT1 (HBT1) of Saccharomyces cerevisiae (strain ATCC 204508 / S288c) (Baker's yeast).